We begin with the raw amino-acid sequence, 611 residues long: MAGPEPEPVSSAAATTPAPSAPVVLPKTSESDQLLKIRHSMSHVMAMAVQQLFPKARVTIGPWTETGFYYDFDNPDPFTEADLKAIKKGMIKIINKKLPLQRVEVSRNEAEEKIKAQNEPYKLEILQGLHEPITLYTLGEDWWDLCAGPHVDHTGQLNAKAFELESLAGAYWRGDETKAQLQRIYGTAWESPEQLAEHKRRKEEALRRDHRRIGKDLDLFSIEDEAGAGLVFWHPRGARIRLLIEEFWRQAHFEGGYELLYTPHVADISLWKTSGHLDFYAESMFGPMEVDEREYQLKPMNCPFHVLTYASKLRSYRELPIRWAELGTVYRYERPGVMHGLMRVRGFTQDDAHVFCLPEQISDEILKILDLTERILSAFDFSNYEINLSTRPEKSIGEDAVWDLATKGLIEALERKGWAYKIDEGGGAFYGPKIDLKIEDAIGRMWQCSTIQLDFNLPERFELDYIAADGSKQRPIMIHRAIFGSLERFFGIMTENYAGDYPFWLAPEQVRLLPVTDEVQPYAEQLLDQLTKAGVRATVDRSGDRLGKLIRTGEQMKIPVLAVIGAKEAEQNAVSLRSRRDGDLGVTAVSDLLSAAQMANSERAAGLELNR.

The interval 1–27 (MAGPEPEPVSSAAATTPAPSAPVVLPK) is disordered. The segment covering 8 to 24 (PVSSAAATTPAPSAPVV) has biased composition (low complexity). Residues 209–502 (DHRRIGKDLD…MTENYAGDYP (294 aa)) form a catalytic region. Residues Cys-302, His-353, and His-479 each contribute to the Zn(2+) site.

This sequence belongs to the class-II aminoacyl-tRNA synthetase family. In terms of assembly, homodimer. Zn(2+) is required as a cofactor.

The protein resides in the cytoplasm. It catalyses the reaction tRNA(Thr) + L-threonine + ATP = L-threonyl-tRNA(Thr) + AMP + diphosphate + H(+). Catalyzes the attachment of threonine to tRNA(Thr) in a two-step reaction: L-threonine is first activated by ATP to form Thr-AMP and then transferred to the acceptor end of tRNA(Thr). Also edits incorrectly charged L-seryl-tRNA(Thr). The sequence is that of Threonine--tRNA ligase from Synechococcus sp. (strain CC9605).